Here is a 312-residue protein sequence, read N- to C-terminus: Glycerol-3-phosphate phosphatase (312 aa).

Aspartate 30 (nucleophile) is an active-site residue. Mg(2+) contacts are provided by aspartate 30, aspartate 32, and aspartate 251. Catalysis depends on aspartate 32, which acts as the Proton donor.

It belongs to the HAD-like hydrolase superfamily. CbbY/CbbZ/Gph/YieH family. As to quaternary structure, homodimer. Requires Mg(2+) as cofactor.

The enzyme catalyses O-phospho-L-tyrosyl-[protein] + H2O = L-tyrosyl-[protein] + phosphate. It catalyses the reaction sn-glycerol 1-phosphate + H2O = glycerol + phosphate. The catalysed reaction is sn-glycerol 3-phosphate + H2O = glycerol + phosphate. Its function is as follows. Glycerol-3-phosphate phosphatase hydrolyzing glycerol-3-phosphate into glycerol. Thereby, regulates the cellular levels of glycerol-3-phosphate a metabolic intermediate of glucose, lipid and energy metabolism. Was also shown to have a 2-phosphoglycolate phosphatase activity and a tyrosine-protein phosphatase activity. However, their physiological relevance is unclear. In vitro, also has a phosphatase activity toward ADP, ATP, GDP and GTP. In Gallus gallus (Chicken), this protein is Glycerol-3-phosphate phosphatase.